The primary structure comprises 209 residues: Large ribosomal subunit protein uL3 (209 aa).

The disordered stretch occupies residues 127–166 (NFGGGQRTHGQSDRLRAPGSIGGASDPSKTFKGTKMGGRM).

Belongs to the universal ribosomal protein uL3 family. In terms of assembly, part of the 50S ribosomal subunit. Forms a cluster with proteins L14 and L19.

Functionally, one of the primary rRNA binding proteins, it binds directly near the 3'-end of the 23S rRNA, where it nucleates assembly of the 50S subunit. This chain is Large ribosomal subunit protein uL3, found in Chlorobium phaeovibrioides (strain DSM 265 / 1930) (Prosthecochloris vibrioformis (strain DSM 265)).